The primary structure comprises 184 residues: Effector CFEM1 (184 aa).

The first 17 residues, 1–17 (MKYSVAFVALAAVAAQA), serve as a signal peptide directing secretion. The CFEM domain occupies 18–112 (QSLADVPKCA…PTTTAAATST (95 aa)). 4 cysteine pairs are disulfide-bonded: Cys-26–Cys-68, Cys-30–Cys-63, Cys-41–Cys-48, and Cys-50–Cys-85. A heme-binding site is contributed by Asp-45. Disordered stretches follow at residues 83–106 (NLCK…PTTT) and 136–163 (IIPT…EQAN). Basic and acidic residues predominate over residues 88–103 (PPKESEAKSTAEEEKP). Asn-163 is lipidated: GPI-anchor amidated asparagine. Residues 164–184 (GAAGLKGLGALAMAAFAALAL) constitute a propeptide, removed in mature form.

The protein belongs to the RBT5 family. In terms of assembly, interacts with Z.mays LRR5; the interaction is direct. Interacts (via CFEM domain) with Z.mays WAK17 isoform 2; the interaction is direct.

It is found in the secreted. It localises to the cell wall. Its subcellular location is the cell membrane. The protein localises to the cell septum. The protein resides in the cytoplasm. Functionally, suppresses host programmed cell death during infection by binding to Z.mays WAK17 isoform 2 and Z.mays LRR5, to prevent activation of Z.mays WAK17 isoform 1 and the downstream hypersensitive response. The sequence is that of Effector CFEM1 from Gibberella zeae (strain ATCC MYA-4620 / CBS 123657 / FGSC 9075 / NRRL 31084 / PH-1) (Wheat head blight fungus).